A 132-amino-acid chain; its full sequence is Cliotide T2 (132 aa).

The first 28 residues, 1-28, serve as a signal peptide directing secretion; it reads MAYVRLTSLAVLFFLAASVMLNVKKTEG. A cross-link (cyclopeptide (Gly-Asn)) is located at residues 29–58; sequence GEFLKCGESCVQGECYTPGCSCDWPICKKN. Disulfide bonds link Cys-34/Cys-48, Cys-38/Cys-50, and Cys-43/Cys-55. The propeptide at 59–132 is removed in mature form; it reads HIIATNAKTV…NLKMPMTIIN (74 aa).

In terms of processing, this is a cyclic peptide. In terms of tissue distribution, expressed in flower, stem, shoot and pod but not in root, leaf, seed and nodule (at protein level).

Functionally, probably participates in a plant defense mechanism. Not active against Gram-negative bacteria E.coli ATCC 700926, K.pneumoniae ATTC 13883 and P.aeruginosa ATCC 39018 at concentration up to 100 uM. Has cytotoxic but no hemolytic activity. The chain is Cliotide T2 from Clitoria ternatea (Butterfly pea).